We begin with the raw amino-acid sequence, 191 residues long: uncharacterized protein (191 aa).

This is an uncharacterized protein from Archaeoglobus fulgidus (strain ATCC 49558 / DSM 4304 / JCM 9628 / NBRC 100126 / VC-16).